Reading from the N-terminus, the 1161-residue chain is MMKQAQQQPPPPPASSAATTTTAMAAAAAAAVVGSGCEGEKTKAPAINSELWHACAGPLVSLPPAGSLVVYFPQGHSEQVAASMQKDVDAHVPSYPNLPSKLICLLHNVTLHADPETDEVYAQMTLQPVTSYGKEALQLSELALKQARPQTEFFCKTLTASDTSTHGGFSVPRRAAEKIFPPLDFSMQPPAQELQARDLHDNVWTFRHIYRGQPKRHLLTTGWSLFVSGKRLFAGDSVIFVRDEKQQLLLGIRRANRQPTNISSSVLSSDSMHIGILAAAAHAAANNSPFTIFYNPRASPTEFVIPFAKYQKAVYGNQISLGMRFRMMFETEELGTRRYMGTITGISDLDPVRWKNSQWRNLQVGWDESAAGERRNRVSIWEIEPVAAPFFICPPPFFGAKRPRQLDDESSEMENLLKRAMPWLGEEICIKDPQTQNTIMPGLSLVQWMNMNMQQSSSFANTAMQSEYLRSLSNPNMQNLGAADLSRQLCLQNQLLQQNNIQFNTPKLSQQMQPVNELAKAGIPLNQLGVSTKPQEQIHDASNLQRQQPSMNHMLPLSQAQTNLGQAQVLVQNQMQQQHASSTQGQQPATSQPLLLPQQQQQQQQQQQQQQQQQQQQKLLQQQQQQLLLQQQQQLSKMPAQLSSLANQQFQLTDQQLQLQLLQKLQQQQQSLLSQPAVTLAQLPLIQEQQKLLLDMQQQLSNSQTLSQQQMMPQQSTKVPSQNTPLPLPVQQEPQQKLLQKQAMLADTSEAAVPPTTSVNVISTTGSPLMTTGATHSVLTEEIPSCSTSPSTANGNHLLQPILGRNKHCSMINTEKVPQSAAPMSVPSSLEAVTATPRMMKDSPKLNHNVKQSVVASKLANAGTGSQNYVNNPPPTDYLETASSATSVWLSQNDGLLHQNFPMSNFNQPQMFKDAPPDAEIHAANTSNNALFGINGDGPLGFPIGLGTDDFLSNGIDAAKYENHISTEIDNSYRIPKDAQQEISSSMVSQSFGASDMAFNSIDSTINDGGFLNRSSWPPAAPLKRMRTFTKVYKRGAVGRSIDMSQFSGYDELKHALARMFSIEGQLEERQRIGWKLVYKDHEDDILLLGDDPWEEFVGCVKCIRILSPQEVQQMSLEGCDLGNNIPPNQACSSSDGGNAWRARCDQNSGNPSNGSYEQFE.

Residues 1 to 20 form a disordered region; sequence MMKQAQQQPPPPPASSAATT. Positions 154–256 form a DNA-binding region, TF-B3; it reads FCKTLTASDT…QLLLGIRRAN (103 aa). The interval 573-598 is disordered; that stretch reads NQMQQQHASSTQGQQPATSQPLLLPQ. The PB1 domain occupies 1027-1111; it reads RTFTKVYKRG…KCIRILSPQE (85 aa).

This sequence belongs to the ARF family. As to quaternary structure, homodimers and heterodimers. In terms of tissue distribution, expressed in roots, culms, leaves and young panicles.

It localises to the nucleus. Its function is as follows. Auxin response factors (ARFs) are transcriptional factors that bind specifically to the DNA sequence 5'-TGTCTC-3' found in the auxin-responsive promoter elements (AuxREs). This Oryza sativa subsp. japonica (Rice) protein is Auxin response factor 19 (ARF19).